The primary structure comprises 356 residues: Holliday junction branch migration complex subunit RuvB (356 aa).

The large ATPase domain (RuvB-L) stretch occupies residues 13–201 (SSNLSRKTRL…FGITQRLNFY (189 aa)). Residues 15 to 35 (NLSRKTRLLDPTPSLEEGKVR) are disordered. ATP contacts are provided by residues Leu40, Arg41, Gly82, Lys85, Thr86, Thr87, 148 to 150 (EDF), Arg191, Tyr201, and Arg238. Thr86 lines the Mg(2+) pocket. A small ATPAse domain (RuvB-S) region spans residues 202-273 (SISDLNRIIQ…LVDKSLTLHQ (72 aa)). A head domain (RuvB-H) region spans residues 276–356 (ECGLDQSDRR…NSCKNSPIIK (81 aa)). Positions 331 and 336 each coordinate DNA.

Belongs to the RuvB family. Homohexamer. Forms an RuvA(8)-RuvB(12)-Holliday junction (HJ) complex. HJ DNA is sandwiched between 2 RuvA tetramers; dsDNA enters through RuvA and exits via RuvB. An RuvB hexamer assembles on each DNA strand where it exits the tetramer. Each RuvB hexamer is contacted by two RuvA subunits (via domain III) on 2 adjacent RuvB subunits; this complex drives branch migration. In the full resolvosome a probable DNA-RuvA(4)-RuvB(12)-RuvC(2) complex forms which resolves the HJ.

It is found in the cytoplasm. The enzyme catalyses ATP + H2O = ADP + phosphate + H(+). Functionally, the RuvA-RuvB-RuvC complex processes Holliday junction (HJ) DNA during genetic recombination and DNA repair, while the RuvA-RuvB complex plays an important role in the rescue of blocked DNA replication forks via replication fork reversal (RFR). RuvA specifically binds to HJ cruciform DNA, conferring on it an open structure. The RuvB hexamer acts as an ATP-dependent pump, pulling dsDNA into and through the RuvAB complex. RuvB forms 2 homohexamers on either side of HJ DNA bound by 1 or 2 RuvA tetramers; 4 subunits per hexamer contact DNA at a time. Coordinated motions by a converter formed by DNA-disengaged RuvB subunits stimulates ATP hydrolysis and nucleotide exchange. Immobilization of the converter enables RuvB to convert the ATP-contained energy into a lever motion, pulling 2 nucleotides of DNA out of the RuvA tetramer per ATP hydrolyzed, thus driving DNA branch migration. The RuvB motors rotate together with the DNA substrate, which together with the progressing nucleotide cycle form the mechanistic basis for DNA recombination by continuous HJ branch migration. Branch migration allows RuvC to scan DNA until it finds its consensus sequence, where it cleaves and resolves cruciform DNA. In Prochlorococcus marinus (strain SARG / CCMP1375 / SS120), this protein is Holliday junction branch migration complex subunit RuvB.